The chain runs to 430 residues: Phosphomethylpyrimidine synthase (430 aa).

Substrate-binding positions include asparagine 67, methionine 96, tyrosine 125, histidine 161, 183-185 (SRG), 224-227 (DALR), and glutamate 263. Histidine 267 is a Zn(2+) binding site. Substrate is bound at residue tyrosine 290. Histidine 331 lines the Zn(2+) pocket. Cysteine 406, cysteine 409, and cysteine 413 together coordinate [4Fe-4S] cluster.

Belongs to the ThiC family. As to quaternary structure, homodimer. [4Fe-4S] cluster is required as a cofactor.

It catalyses the reaction 5-amino-1-(5-phospho-beta-D-ribosyl)imidazole + S-adenosyl-L-methionine = 4-amino-2-methyl-5-(phosphooxymethyl)pyrimidine + CO + 5'-deoxyadenosine + formate + L-methionine + 3 H(+). The protein operates within cofactor biosynthesis; thiamine diphosphate biosynthesis. Its function is as follows. Catalyzes the synthesis of the hydroxymethylpyrimidine phosphate (HMP-P) moiety of thiamine from aminoimidazole ribotide (AIR) in a radical S-adenosyl-L-methionine (SAM)-dependent reaction. This chain is Phosphomethylpyrimidine synthase, found in Campylobacter jejuni subsp. doylei (strain ATCC BAA-1458 / RM4099 / 269.97).